A 74-amino-acid polypeptide reads, in one-letter code: Kappa-scoloptoxin(07)-Ssm2c (74 aa).

The first 19 residues, 1 to 19 (MLVFYAPLFVSIFSNTVMG), serve as a signal peptide directing secretion. The propeptide occupies 20–41 (ATIDKPIPKPILREAIEKIAVN).

It belongs to the scoloptoxin-07 family. Post-translationally, contains 3 disulfide bonds. In terms of tissue distribution, expressed by the venom gland.

Its subcellular location is the secreted. Functionally, inhibits voltage-gated potassium channels. This chain is Kappa-scoloptoxin(07)-Ssm2c, found in Scolopendra mutilans (Chinese red-headed centipede).